The chain runs to 406 residues: Phosphatidylinositol 5-phosphate 4-kinase type-2 alpha (406 aa).

Residue Ala-2 is modified to N-acetylalanine. Thr-3 bears the Phosphothreonine mark. The residue at position 14 (Ser-14) is a Phosphoserine. The region spanning 33-405 is the PIPK domain; it reads ASDPLLSVLM…RFLDFIGHIL (373 aa). The interval 59 to 65 is required for interaction with PIP5K1A; the sequence is VMLMPDD. An N6-acetyllysine mark is found at Lys-89 and Lys-145. The interval 288-329 is disordered; sequence QEEVECEENDGEEEGESDGTHPVGTPPDSPGNTLNSSPPLAP. Residues 289 to 304 show a composition bias toward acidic residues; it reads EEVECEENDGEEEGES.

In terms of assembly, homodimer. Interacts with PIP4K2B; the interaction may regulate localization to the nucleus. Probably interacts with PIP5K1A; the interaction inhibits PIP5K1A kinase activity. Phosphorylated in tyrosines. Phosphorylation is induced by light and increases kinase activity. In terms of tissue distribution, expressed ubiquitously, with high levels in the brain. Present in most tissues, except notably skeletal muscle and small intestine.

Its subcellular location is the cell membrane. It is found in the nucleus. The protein localises to the lysosome. It localises to the cytoplasm. The protein resides in the photoreceptor inner segment. Its subcellular location is the cell projection. It is found in the cilium. The protein localises to the photoreceptor outer segment. The catalysed reaction is a 1,2-diacyl-sn-glycero-3-phospho-(1D-myo-inositol-5-phosphate) + ATP = a 1,2-diacyl-sn-glycero-3-phospho-(1D-myo-inositol-4,5-bisphosphate) + ADP + H(+). It catalyses the reaction 1,2-dihexadecanoyl-sn-glycero-3-phospho-(1D-myo-inositol-5-phosphate) + ATP = 1,2-dihexadecanoyl-sn-glycero-3-phospho-(1D-myo-inositol-4,5-bisphosphate) + ADP + H(+). The enzyme catalyses 1,2-dihexadecanoyl-sn-glycero-3-phospho-(1D-myo-inositol-5-phosphate) + GTP = 1,2-dihexadecanoyl-sn-glycero-3-phospho-(1D-myo-inositol-4,5-bisphosphate) + GDP + H(+). With respect to regulation, in rod outer segments, activated by light. Inhibited by I-OMe tyrphostin AG-538 (I-OMe-AG-538), acting as an ATP-competitive inhibitor. Functionally, catalyzes the phosphorylation of phosphatidylinositol 5-phosphate (PtdIns5P) on the fourth hydroxyl of the myo-inositol ring, to form phosphatidylinositol 4,5-bisphosphate (PtdIns(4,5)P2). Has both ATP- and GTP-dependent kinase activities. May exert its function by regulating the levels of PtdIns5P, which functions in the cytosol by increasing AKT activity and in the nucleus signals through ING2. May regulate the pool of cytosolic PtdIns5P in response to the activation of tyrosine phosphorylation. Required for lysosome-peroxisome membrane contacts and intracellular cholesterol transport through modulating peroxisomal PtdIns(4,5)P2 level. In collaboration with PIP4K2B, has a role in mediating autophagy in times of nutrient stress. Required for autophagosome-lysosome fusion and the regulation of cellular lipid metabolism. May be involved in thrombopoiesis, and the terminal maturation of megakaryocytes and regulation of their size. Negatively regulates insulin signaling through a catalytic-independent mechanism. PIP4Ks interact with PIP5Ks and suppress PIP5K-mediated PtdIns(4,5)P2 synthesis and insulin-dependent conversion to PtdIns(3,4,5)P3. In Homo sapiens (Human), this protein is Phosphatidylinositol 5-phosphate 4-kinase type-2 alpha.